A 198-amino-acid chain; its full sequence is MPKVGMQPIRRQQLIDATLAAVNEVGMHDATIAQIARRAGVSNGIISHYFKDKNGLLEATMRYLISHLGEAVKLRLQALSDHSPASRLQAIVAGNFDDSQINSAAMKTWLAFWASSLHQPQLNRLQQVNGRRLYSNLCAEFSRVLPQAEARLAAKGLAALIDGLWLRSALRGAAFNQAQAIALTTDYITFQLRGHTPP.

The HTH tetR-type domain maps to 8 to 68 (PIRRQQLIDA…ATMRYLISHL (61 aa)). A DNA-binding region (H-T-H motif) is located at residues 31–50 (TIAQIARRAGVSNGIISHYF).

It functions in the pathway amine and polyamine biosynthesis; betaine biosynthesis via choline pathway [regulation]. In terms of biological role, repressor involved in the biosynthesis of the osmoprotectant glycine betaine. It represses transcription of the choline transporter BetT and the genes of BetAB involved in the synthesis of glycine betaine. In Serratia proteamaculans (strain 568), this protein is HTH-type transcriptional regulator BetI.